We begin with the raw amino-acid sequence, 135 residues long: Peptidyl-prolyl cis-trans isomerase FPR2 (135 aa).

The signal sequence occupies residues 1 to 17 (MMFNIYLFVTFFSTILA). Positions 43-132 (GDKVKVHYTG…VFDVELVDVK (90 aa)) constitute a PPIase FKBP-type domain.

It belongs to the FKBP-type PPIase family. FKBP2 subfamily.

The protein resides in the endoplasmic reticulum membrane. It catalyses the reaction [protein]-peptidylproline (omega=180) = [protein]-peptidylproline (omega=0). With respect to regulation, inhibited by both FK506 and rapamycin. Binds FK506 with 15-fold lower affinity than FKB1. Functionally, PPIases accelerate the folding of proteins. It catalyzes the cis-trans isomerization of proline imidic peptide bonds in oligopeptides. FKBP-13 may play a role in protein trafficking in the ER. The polypeptide is Peptidyl-prolyl cis-trans isomerase FPR2 (FPR2) (Saccharomyces cerevisiae (strain ATCC 204508 / S288c) (Baker's yeast)).